The sequence spans 230 residues: Large ribosomal subunit protein uL1 (230 aa).

This sequence belongs to the universal ribosomal protein uL1 family. Part of the 50S ribosomal subunit.

Its function is as follows. Binds directly to 23S rRNA. The L1 stalk is quite mobile in the ribosome, and is involved in E site tRNA release. Protein L1 is also a translational repressor protein, it controls the translation of the L11 operon by binding to its mRNA. The polypeptide is Large ribosomal subunit protein uL1 (Bifidobacterium longum (strain DJO10A)).